An 89-amino-acid chain; its full sequence is Small ribosomal subunit protein uS14 (89 aa).

It belongs to the universal ribosomal protein uS14 family. Part of the 30S ribosomal subunit. Contacts proteins S3 and S10.

Binds 16S rRNA, required for the assembly of 30S particles and may also be responsible for determining the conformation of the 16S rRNA at the A site. This Lacticaseibacillus casei (strain BL23) (Lactobacillus casei) protein is Small ribosomal subunit protein uS14.